We begin with the raw amino-acid sequence, 49 residues long: Large ribosomal subunit protein bL32 (49 aa).

It belongs to the bacterial ribosomal protein bL32 family.

The chain is Large ribosomal subunit protein bL32 from Helicobacter hepaticus (strain ATCC 51449 / 3B1).